A 264-amino-acid chain; its full sequence is Segregation and condensation protein A (264 aa).

It belongs to the ScpA family. In terms of assembly, component of a cohesin-like complex composed of ScpA, ScpB and the Smc homodimer, in which ScpA and ScpB bind to the head domain of Smc. The presence of the three proteins is required for the association of the complex with DNA.

It is found in the cytoplasm. Participates in chromosomal partition during cell division. May act via the formation of a condensin-like complex containing Smc and ScpB that pull DNA away from mid-cell into both cell halves. This is Segregation and condensation protein A from Enterococcus faecalis (strain ATCC 700802 / V583).